Here is a 355-residue protein sequence, read N- to C-terminus: UDP-N-acetylglucosamine--N-acetylmuramyl-(pentapeptide) pyrophosphoryl-undecaprenol N-acetylglucosamine transferase (355 aa).

UDP-N-acetyl-alpha-D-glucosamine-binding positions include 12 to 14 (TGG), Asn124, Arg160, Ser192, Ile243, 262 to 267 (ALTVCE), and Gln287.

The protein belongs to the glycosyltransferase 28 family. MurG subfamily.

The protein resides in the cell inner membrane. The enzyme catalyses di-trans,octa-cis-undecaprenyl diphospho-N-acetyl-alpha-D-muramoyl-L-alanyl-D-glutamyl-meso-2,6-diaminopimeloyl-D-alanyl-D-alanine + UDP-N-acetyl-alpha-D-glucosamine = di-trans,octa-cis-undecaprenyl diphospho-[N-acetyl-alpha-D-glucosaminyl-(1-&gt;4)]-N-acetyl-alpha-D-muramoyl-L-alanyl-D-glutamyl-meso-2,6-diaminopimeloyl-D-alanyl-D-alanine + UDP + H(+). The protein operates within cell wall biogenesis; peptidoglycan biosynthesis. In terms of biological role, cell wall formation. Catalyzes the transfer of a GlcNAc subunit on undecaprenyl-pyrophosphoryl-MurNAc-pentapeptide (lipid intermediate I) to form undecaprenyl-pyrophosphoryl-MurNAc-(pentapeptide)GlcNAc (lipid intermediate II). The polypeptide is UDP-N-acetylglucosamine--N-acetylmuramyl-(pentapeptide) pyrophosphoryl-undecaprenol N-acetylglucosamine transferase (Haemophilus ducreyi (strain 35000HP / ATCC 700724)).